Reading from the N-terminus, the 251-residue chain is Ribosome maturation factor RimP (251 aa).

The disordered stretch occupies residues 176–251; sequence SLRRGSAPPQ…ARLKNRDTLH (76 aa). Positions 186-196 are enriched in acidic residues; it reads DGEEGDEEEGA. A compositionally biased stretch (basic and acidic residues) spans 216-226; sequence PKLDKKSDKPV.

This sequence belongs to the RimP family.

Its subcellular location is the cytoplasm. Required for maturation of 30S ribosomal subunits. This chain is Ribosome maturation factor RimP, found in Methylorubrum extorquens (strain PA1) (Methylobacterium extorquens).